The primary structure comprises 206 residues: Small ribosomal subunit protein uS4 (206 aa).

One can recognise an S4 RNA-binding domain in the interval 98–155 (TRLDNVVYRLGWALSRAQARQIVSHGKIAVNGKRVNIPSYNLKPGDVVELLDKDLIPV).

It belongs to the universal ribosomal protein uS4 family. In terms of assembly, part of the 30S ribosomal subunit. Contacts protein S5. The interaction surface between S4 and S5 is involved in control of translational fidelity.

One of the primary rRNA binding proteins, it binds directly to 16S rRNA where it nucleates assembly of the body of the 30S subunit. In terms of biological role, with S5 and S12 plays an important role in translational accuracy. The chain is Small ribosomal subunit protein uS4 from Dictyoglomus turgidum (strain DSM 6724 / Z-1310).